The chain runs to 324 residues: Lipoyl synthase (324 aa).

Residues Cys65, Cys70, Cys76, Cys91, Cys95, Cys98, and Ser302 each coordinate [4Fe-4S] cluster. The region spanning 77 to 291 is the Radical SAM core domain; it reads WEDREATFLI…AQYAEGLGFA (215 aa).

This sequence belongs to the radical SAM superfamily. Lipoyl synthase family. [4Fe-4S] cluster is required as a cofactor.

It is found in the cytoplasm. The catalysed reaction is [[Fe-S] cluster scaffold protein carrying a second [4Fe-4S](2+) cluster] + N(6)-octanoyl-L-lysyl-[protein] + 2 oxidized [2Fe-2S]-[ferredoxin] + 2 S-adenosyl-L-methionine + 4 H(+) = [[Fe-S] cluster scaffold protein] + N(6)-[(R)-dihydrolipoyl]-L-lysyl-[protein] + 4 Fe(3+) + 2 hydrogen sulfide + 2 5'-deoxyadenosine + 2 L-methionine + 2 reduced [2Fe-2S]-[ferredoxin]. It functions in the pathway protein modification; protein lipoylation via endogenous pathway; protein N(6)-(lipoyl)lysine from octanoyl-[acyl-carrier-protein]: step 2/2. Catalyzes the radical-mediated insertion of two sulfur atoms into the C-6 and C-8 positions of the octanoyl moiety bound to the lipoyl domains of lipoate-dependent enzymes, thereby converting the octanoylated domains into lipoylated derivatives. In Mycobacterium ulcerans (strain Agy99), this protein is Lipoyl synthase.